The following is a 412-amino-acid chain: Subtilisin-like protease 6 (412 aa).

Residues Met-1–Gly-20 form the signal peptide. A propeptide spanning residues Ala-21–Leu-127 is cleaved from the precursor. Residues Lys-36 to Thr-120 enclose the Inhibitor I9 domain. Asn-123 and Asn-126 each carry an N-linked (GlcNAc...) asparagine glycan. The region spanning Ser-135 to Lys-412 is the Peptidase S8 domain. Residues Asp-167 and His-198 each act as charge relay system in the active site. N-linked (GlcNAc...) asparagine glycans are attached at residues Asn-252 and Asn-264. The active-site Charge relay system is the Ser-358. Asn-408 is a glycosylation site (N-linked (GlcNAc...) asparagine).

This sequence belongs to the peptidase S8 family.

The protein resides in the secreted. In terms of biological role, secreted subtilisin-like serine protease with keratinolytic activity that contributes to pathogenicity. This chain is Subtilisin-like protease 6 (SUB6), found in Trichophyton tonsurans (Scalp ringworm fungus).